A 131-amino-acid chain; its full sequence is Olfactory receptor-like protein COR9 (131 aa).

Residues 1-16 are Cytoplasmic-facing; the sequence is VAICSPLLYSTVMTKR. Residues 17-41 form a helical membrane-spanning segment; sequence VCMQLVVGSYMGGLLNSLTHTCGLL. Residues 42–82 are Extracellular-facing; the sequence is GLPFCGPNVINHYFCDIPPLLQLACSDTHRNETLLLAFSAV. Residue Asn-72 is glycosylated (N-linked (GlcNAc...) asparagine). The chain crosses the membrane as a helical span at residues 83–103; it reads IALFTLFVITASYMLILSVIL. Residues 104-116 are Cytoplasmic-facing; it reads KIQSDDGRKKTFH. Residues 117 to 131 form a helical membrane-spanning segment; that stretch reads TCASHLTAITIFFGS.

The protein belongs to the G-protein coupled receptor 1 family.

The protein resides in the cell membrane. Its function is as follows. Odorant receptor. The sequence is that of Olfactory receptor-like protein COR9 (COR9) from Gallus gallus (Chicken).